The sequence spans 462 residues: MILNLIILLAISIVASASNIAAYWGQNAGGDQQTLGDYCSSSPASIIILSFLDGFPNLSLNFANQCSGTFSSGLAHCSQIGSDIKSCQQQGKTILLSLGGATGNYGFSSDSEAVQFAGTLWNKFGGGKDSERPFDDAIVDGFDFDIENKDQTGYAALATQLRKYFSTGTKSYYLSAAPQCPYPDESVGDLMSQVDLDFAFIQFYNNYCSLNQQFNWNSWSNYARGKSIKLYLGLPGSSSSAGSGFVGLSTVQRVVASIKGDSSFGGISIWDISSAENGGYLNQLYQALSGSGSPAAPSNSYQPNTPLTRTYGGSTATASAYISVGFTAGATHGSTTTNDLLAWIDSLFGSSQSSVQQYATPVQSVTATPQPVAATTTSAPKPTASAFNWFGWFDGTTTSTTLQTVYSTVPADQTVYVTLTTTVGSQMLQSLFDKRDVIAEAKSTNLQICWLLFIPLLALICS.

Residues 1-17 (MILNLIILLAISIVASA) form the signal peptide. The region spanning 18 to 291 (SNIAAYWGQN…NQLYQALSGS (274 aa)) is the GH18 domain. A glycan (N-linked (GlcNAc...) asparagine) is linked at N57. The active-site Proton donor is E147.

The protein belongs to the glycosyl hydrolase 18 family. Chitinase class III subfamily.

Its subcellular location is the secreted. It carries out the reaction Random endo-hydrolysis of N-acetyl-beta-D-glucosaminide (1-&gt;4)-beta-linkages in chitin and chitodextrins.. This chain is Chitinase 1 (CHT1), found in Candida albicans (Yeast).